An 893-amino-acid chain; its full sequence is Serine/threonine-protein kinase PLK4 (893 aa).

The Protein kinase domain occupies 12–265; it reads FRVGNLLGKG…LSSVLDHPFM (254 aa). Residues 18 to 26 and Lys41 contribute to the ATP site; that span reads LGKGSFAGV. N6-acetyllysine occurs at positions 45 and 46. Asp136 functions as the Proton acceptor in the catalytic mechanism. The span at 349 to 358 shows a compositional bias: polar residues; sequence NQEQETSNSG. Residues 349–393 form a disordered region; that stretch reads NQEQETSNSGRGRVIQEAEERPHSRYLRRAHSSDRSETSHGQSRV. Residues 362 to 371 are compositionally biased toward basic and acidic residues; it reads VIQEAEERPH. Residues Ser403 and Ser588 each carry the phosphoserine modification. The 114-residue stretch at 509 to 622 folds into the Cryptic POLO box 1 (CPB1) domain; the sequence is TLRSITSPLT…SRFVQLVRSK (114 aa). The Cryptic POLO box 2 (CPB2) domain maps to 623–736; that stretch reads SPKITYFTRY…GRRPSSTSSP (114 aa). The interval 730–749 is disordered; that stretch reads PSSTSSPKALTPPPPVDPNY. Residues 809–887 enclose the POLO box domain; it reads QLLKSVFVKN…LSSILLMFSN (79 aa).

This sequence belongs to the protein kinase superfamily. Ser/Thr protein kinase family. CDC5/Polo subfamily. As to quaternary structure, homodimer. Interacts with CEP152 (via N-terminus). Interacts with CEP78; this interaction may be important for proper PLK4 localization to the centriole and PLK4-induced overduplication of centrioles. Interacts with CEP131. Interacts simultaneously with TENT5C and CEP192. Interacts with TENT5C; this interaction leads to the TENT5C recruitment in the centrosome. Interacts with CEP85; this interaction may be important in cell migration and centriole assembly. Post-translationally, ubiquitinated; leading to its degradation by the proteasome. In terms of processing, tyrosine-phosphorylated by TEC. Acetylation by KAT2A and KAT2B impairs kinase activity by shifting the kinase to an inactive conformation.

Its subcellular location is the cytoplasm. The protein localises to the cytoskeleton. It is found in the microtubule organizing center. The protein resides in the centrosome. It localises to the centriole. Its subcellular location is the nucleus. The protein localises to the nucleolus. It is found in the cleavage furrow. The enzyme catalyses L-seryl-[protein] + ATP = O-phospho-L-seryl-[protein] + ADP + H(+). It catalyses the reaction L-threonyl-[protein] + ATP = O-phospho-L-threonyl-[protein] + ADP + H(+). Its function is as follows. Serine/threonine-protein kinase that plays a central role in centriole duplication. Able to trigger procentriole formation on the surface of the parental centriole cylinder, leading to the recruitment of centriole biogenesis proteins such as SASS6, CPAP, CCP110, CEP135 and gamma-tubulin. When overexpressed, it is able to induce centrosome amplification through the simultaneous generation of multiple procentrioles adjoining each parental centriole during S phase. Phosphorylates 'Ser-151' of FBXW5 during the G1/S transition, leading to inhibit FBXW5 ability to ubiquitinate SASS6. Its central role in centriole replication suggests a possible role in tumorigenesis, centrosome aberrations being frequently observed in tumors. Also involved in deuterosome-mediated centriole amplification in multiciliated that can generate more than 100 centrioles. Also involved in trophoblast differentiation by phosphorylating HAND1, leading to disrupt the interaction between HAND1 and MDFIC and activate HAND1. Phosphorylates CDC25C and CHEK2. Required for the recruitment of STIL to the centriole and for STIL-mediated centriole amplification. Phosphorylates CEP131 and PCM1 which is essential for proper organization and integrity of centriolar satellites. This Bos taurus (Bovine) protein is Serine/threonine-protein kinase PLK4.